Reading from the N-terminus, the 368-residue chain is Galactoside 2-alpha-L-fucosyltransferase Sec1 (368 aa).

Residues 1–20 (MPSDSCLLSLTVLQRLRAIC) are Cytoplasmic-facing. The chain crosses the membrane as a helical; Signal-anchor for type II membrane protein span at residues 21–41 (PPLSTFYLFFVIFVVSTIFHC). Topologically, residues 42 to 368 (HRRLGLVPAP…APKRHWGALL (327 aa)) are lumenal. N-linked (GlcNAc...) asparagine glycosylation is found at Asn-195, Asn-289, and Asn-315.

This sequence belongs to the glycosyltransferase 11 family.

The protein localises to the golgi apparatus. It is found in the golgi stack membrane. It catalyses the reaction a ganglioside GM1 + GDP-beta-L-fucose = a ganglioside Fuc-GM1 + GDP + H(+). Its pathway is protein modification; protein glycosylation. Catalyzes the transfer of alpha 1,2-linked fucose to ganglioside GM1 and galacto-N-biose. This Mus musculus (Mouse) protein is Galactoside 2-alpha-L-fucosyltransferase Sec1.